Consider the following 523-residue polypeptide: Glycerate kinase (523 aa).

The residue at position 60 (Ser60) is a Phosphoserine. Lys200 bears the N6-acetyllysine mark.

This sequence belongs to the glycerate kinase type-2 family. As to expression, expressed in the hippocampus, callus, brain, cerebellum, renal cortex interstitial cells, epithelium of interlobular bile duct and skeletal muscle.

Its subcellular location is the cytoplasm. The enzyme catalyses (R)-glycerate + ATP = (2R)-3-phosphoglycerate + ADP + H(+). The protein is Glycerate kinase (Glyctk) of Mus musculus (Mouse).